Reading from the N-terminus, the 312-residue chain is Methionyl-tRNA formyltransferase (312 aa).

(6S)-5,6,7,8-tetrahydrofolate is bound at residue 110–113 (SLLP).

The protein belongs to the Fmt family.

It catalyses the reaction L-methionyl-tRNA(fMet) + (6R)-10-formyltetrahydrofolate = N-formyl-L-methionyl-tRNA(fMet) + (6S)-5,6,7,8-tetrahydrofolate + H(+). In terms of biological role, attaches a formyl group to the free amino group of methionyl-tRNA(fMet). The formyl group appears to play a dual role in the initiator identity of N-formylmethionyl-tRNA by promoting its recognition by IF2 and preventing the misappropriation of this tRNA by the elongation apparatus. The protein is Methionyl-tRNA formyltransferase of Koribacter versatilis (strain Ellin345).